A 315-amino-acid chain; its full sequence is Methionyl-tRNA formyltransferase (315 aa).

The interval 2–189 is N-terminal domain; it reads SESLRIIFAG…LITTLKQLAD (188 aa). 113–116 provides a ligand contact to (6S)-5,6,7,8-tetrahydrofolate; it reads SLLP. Residues 210–315 are C-terminal domain; sequence KEEARIDWSL…EWFVPGNRLV (106 aa).

This sequence belongs to the Fmt family.

The catalysed reaction is L-methionyl-tRNA(fMet) + (6R)-10-formyltetrahydrofolate = N-formyl-L-methionyl-tRNA(fMet) + (6S)-5,6,7,8-tetrahydrofolate + H(+). Its function is as follows. Attaches a formyl group to the free amino group of methionyl-tRNA(fMet). The formyl group appears to play a dual role in the initiator identity of N-formylmethionyl-tRNA by promoting its recognition by IF2 and preventing the misappropriation of this tRNA by the elongation apparatus. The chain is Methionyl-tRNA formyltransferase from Escherichia coli O157:H7.